The sequence spans 501 residues: Glutamyl-tRNA(Gln) amidotransferase subunit A (501 aa).

Catalysis depends on charge relay system residues Lys-80 and Ser-155. Residue Ser-179 is the Acyl-ester intermediate of the active site.

It belongs to the amidase family. GatA subfamily. As to quaternary structure, heterotrimer of A, B and C subunits.

The enzyme catalyses L-glutamyl-tRNA(Gln) + L-glutamine + ATP + H2O = L-glutaminyl-tRNA(Gln) + L-glutamate + ADP + phosphate + H(+). Its function is as follows. Allows the formation of correctly charged Gln-tRNA(Gln) through the transamidation of misacylated Glu-tRNA(Gln) in organisms which lack glutaminyl-tRNA synthetase. The reaction takes place in the presence of glutamine and ATP through an activated gamma-phospho-Glu-tRNA(Gln). This chain is Glutamyl-tRNA(Gln) amidotransferase subunit A, found in Cupriavidus taiwanensis (strain DSM 17343 / BCRC 17206 / CCUG 44338 / CIP 107171 / LMG 19424 / R1) (Ralstonia taiwanensis (strain LMG 19424)).